Consider the following 410-residue polypeptide: Transforming growth factor beta-3 proprotein (410 aa).

Residues 1 to 23 (MHLQRALVVLALLNLATISLSLS) form the signal peptide. Residues Asn-72, Asn-133, and Asn-140 are each glycosylated (N-linked (GlcNAc...) asparagine). A Cell attachment site motif is present at residues 259–261 (RGD). Gln-291 carries the N5-methylglutamine modification. Intrachain disulfides connect Cys-305-Cys-314, Cys-313-Cys-376, Cys-342-Cys-407, and Cys-346-Cys-409.

Belongs to the TGF-beta family. In terms of assembly, interacts with ASPN. Latency-associated peptide: Homodimer; disulfide-linked. Latency-associated peptide: Interacts with Transforming growth factor beta-3 (TGF-beta-3) chain; interaction is non-covalent and maintains (TGF-beta-3) in a latent state. Latency-associated peptide: Interacts with LRRC32/GARP; leading to regulate activation of TGF-beta-3 and promote epithelial fusion during palate development. Latency-associated peptide: Interacts (via cell attachment site) with integrins, leading to release of the active TGF-beta-3. Transforming growth factor beta-3: Homodimer; disulfide-linked. Transforming growth factor beta-3: Interacts with TGF-beta receptors (TGFBR1 and TGFBR2), leading to signal transduction. In terms of processing, transforming growth factor beta-3 proprotein: The precursor proprotein is cleaved in the Golgi apparatus to form Transforming growth factor beta-3 (TGF-beta-3) and Latency-associated peptide (LAP) chains, which remain non-covalently linked, rendering TGF-beta-3 inactive. Methylated at Gln-291 by N6AMT1. In terms of tissue distribution, expressed in mammary glands with a slight increase in expression prior to lactation and again increasing at the onset of involution, expression peaks at day 3 of involution.

The protein resides in the secreted. Its subcellular location is the extracellular space. The protein localises to the extracellular matrix. In terms of biological role, transforming growth factor beta-3 proprotein: Precursor of the Latency-associated peptide (LAP) and Transforming growth factor beta-3 (TGF-beta-3) chains, which constitute the regulatory and active subunit of TGF-beta-3, respectively. Its function is as follows. Required to maintain the Transforming growth factor beta-3 (TGF-beta-3) chain in a latent state during storage in extracellular matrix. Associates non-covalently with TGF-beta-3 and regulates its activation via interaction with 'milieu molecules', such as LTBP1 and LRRC32/GARP, that control activation of TGF-beta-3. Interaction with integrins results in distortion of the Latency-associated peptide chain and subsequent release of the active TGF-beta-3. Transforming growth factor beta-3: Multifunctional protein that regulates embryogenesis and cell differentiation and is required in various processes such as secondary palate development. Activation into mature form follows different steps: following cleavage of the proprotein in the Golgi apparatus, Latency-associated peptide (LAP) and Transforming growth factor beta-3 (TGF-beta-3) chains remain non-covalently linked rendering TGF-beta-3 inactive during storage in extracellular matrix. At the same time, LAP chain interacts with 'milieu molecules', such as LTBP1 and LRRC32/GARP that control activation of TGF-beta-3 and maintain it in a latent state during storage in extracellular milieus. TGF-beta-3 is released from LAP by integrins: integrin-binding results in distortion of the LAP chain and subsequent release of the active TGF-beta-3. Once activated following release of LAP, TGF-beta-3 acts by binding to TGF-beta receptors (TGFBR1 and TGFBR2), which transduce signal. This chain is Transforming growth factor beta-3 proprotein, found in Mus musculus (Mouse).